Consider the following 483-residue polypeptide: Glutamate--tRNA ligase (483 aa).

The 'HIGH' region signature appears at P9–N19. The 'KMSKS' region signature appears at K253–R257. K256 is a binding site for ATP.

This sequence belongs to the class-I aminoacyl-tRNA synthetase family. Glutamate--tRNA ligase type 1 subfamily. Monomer.

The protein resides in the cytoplasm. It catalyses the reaction tRNA(Glu) + L-glutamate + ATP = L-glutamyl-tRNA(Glu) + AMP + diphosphate. In terms of biological role, catalyzes the attachment of glutamate to tRNA(Glu) in a two-step reaction: glutamate is first activated by ATP to form Glu-AMP and then transferred to the acceptor end of tRNA(Glu). This Mycoplasma mycoides subsp. mycoides SC (strain CCUG 32753 / NCTC 10114 / PG1) protein is Glutamate--tRNA ligase.